Reading from the N-terminus, the 217-residue chain is Nucleoredoxin-like protein 1 (217 aa).

Residues 1-164 form the Thioredoxin domain; the sequence is MASLFSGRIL…AAELLDRSFL (164 aa). Basic and acidic residues predominate over residues 188–204; sequence VDRDVGRERGRNGRDSG. The interval 188–217 is disordered; sequence VDRDVGRERGRNGRDSGDPQGDAGTRAELW.

Belongs to the nucleoredoxin family. Interacts with isoform 1 of BSG. As to expression, expressed in the retina (at protein level). Expressed predominantly by photoreceptors in both the inner and outer nuclear layer (at protein level). Not expressed in the testis, spleen, intestine, lung, cerebellum, or kidney.

Its subcellular location is the cell projection. It is found in the cilium. It localises to the photoreceptor outer segment. Functionally, plays an important role in retinal cone photoreceptor survival. In association with glucose transporter SLC16A1/GLUT1 and BSG, promotes retinal cone survival by enhancing aerobic glycolysis and accelerating the entry of glucose into photoreceptors. May play a role in cone cell viability, slowing down cone degeneration, does not seem to play a role in degenerating rods. The chain is Nucleoredoxin-like protein 1 (Nxnl1) from Mus musculus (Mouse).